The following is a 508-amino-acid chain: Flavonoid 3'-monooxygenase CYP75B137 (508 aa).

The chain crosses the membrane as a helical span at residues 2 to 22; the sequence is LTFFFLWISTLLLSSFIVYLL. Position 445 (Cys-445) interacts with heme.

It belongs to the cytochrome P450 family. Heme is required as a cofactor. In terms of tissue distribution, expressed in young cromes.

The protein resides in the membrane. The catalysed reaction is a 3'-unsubstituted flavone + reduced [NADPH--hemoprotein reductase] + O2 = a 3'-hydroxyflavone + oxidized [NADPH--hemoprotein reductase] + H2O + H(+). It carries out the reaction (2S)-naringenin + reduced [NADPH--hemoprotein reductase] + O2 = (S)-eriodictyol + oxidized [NADPH--hemoprotein reductase] + H2O + H(+). The enzyme catalyses (2R,3R)-dihydrokaempferol + reduced [NADPH--hemoprotein reductase] + O2 = (2R,3R)-dihydroquercetin + oxidized [NADPH--hemoprotein reductase] + H2O + H(+). It catalyses the reaction kaempferol + reduced [NADPH--hemoprotein reductase] + O2 = quercetin + oxidized [NADPH--hemoprotein reductase] + H2O + H(+). It participates in flavonoid metabolism. Its function is as follows. Flavonoid 3'-hydroxylase that catalyzes the 3'-hydroxylation of flavanones, dihydroflavonols and flavonols. Converts narigenin to eriodictyol, dihydrokaempferol to dihydroquercetin and kaempferol to quercetin. The polypeptide is Flavonoid 3'-monooxygenase CYP75B137 (Crocosmia x crocosmiiflora (Montbretia)).